The sequence spans 159 residues: Keratin-associated protein 9-3 (159 aa).

A run of 16 repeats spans residues 8-12, 13-17, 32-36, 37-41, 46-50, 51-55, 56-60, 61-65, 70-74, 75-79, 80-84, 85-89, 129-133, 134-138, 139-143, and 153-157. Residues 8–157 are 16 X 5 AA repeats of C-C-[RQVSHE]-[SPTN]-[TASPI]; sequence CCQPTCCRTT…TCVYSCCQPS (150 aa).

Belongs to the KRTAP type 9 family. As to quaternary structure, interacts with hair keratins.

In the hair cortex, hair keratin intermediate filaments are embedded in an interfilamentous matrix, consisting of hair keratin-associated proteins (KRTAP), which are essential for the formation of a rigid and resistant hair shaft through their extensive disulfide bond cross-linking with abundant cysteine residues of hair keratins. The matrix proteins include the high-sulfur and high-glycine-tyrosine keratins. This chain is Keratin-associated protein 9-3 (KRTAP9-3), found in Homo sapiens (Human).